We begin with the raw amino-acid sequence, 252 residues long: tRNA (guanine-N(7)-)-methyltransferase (252 aa).

4 residues coordinate S-adenosyl-L-methionine: glutamate 75, glutamate 100, aspartate 127, and aspartate 150. Residue aspartate 150 is part of the active site. Lysine 154 serves as a coordination point for substrate. The interaction with RNA stretch occupies residues 156–161 (RHNKRR). Substrate contacts are provided by residues aspartate 186 and 223 to 226 (THFE).

The protein belongs to the class I-like SAM-binding methyltransferase superfamily. TrmB family.

It carries out the reaction guanosine(46) in tRNA + S-adenosyl-L-methionine = N(7)-methylguanosine(46) in tRNA + S-adenosyl-L-homocysteine. The protein operates within tRNA modification; N(7)-methylguanine-tRNA biosynthesis. Functionally, catalyzes the formation of N(7)-methylguanine at position 46 (m7G46) in tRNA. This is tRNA (guanine-N(7)-)-methyltransferase from Xanthomonas oryzae pv. oryzae (strain MAFF 311018).